A 335-amino-acid polypeptide reads, in one-letter code: Pregnancy-specific beta-1-glycoprotein 5 (335 aa).

A signal peptide spans 1 to 34 (MGPLSAPPCTQHITWKGLLLTASLLNFWNLPITA). An Ig-like V-type domain is found at 35–144 (QVTIEALPPK…TGYFTFNLYL (110 aa)). N-linked (GlcNAc...) asparagine glycans are attached at residues Asn104 and Asn111. Residues 127 to 129 (RGD) carry the Cell attachment site motif. 2 Ig-like C2-type domains span residues 147–234 (PKPY…VTLN) and 239–317 (PDLP…KSMT). Intrachain disulfides connect Cys169–Cys217 and Cys261–Cys301. Asn175 and Asn210 each carry an N-linked (GlcNAc...) asparagine glycan.

The protein belongs to the immunoglobulin superfamily. CEA family. As to expression, synthesized by syncytiotrophoblast of the placenta.

It localises to the secreted. This chain is Pregnancy-specific beta-1-glycoprotein 5 (PSG5), found in Homo sapiens (Human).